The sequence spans 622 residues: Elongation factor 4 (622 aa).

The tr-type G domain occupies 17–201 (ALIRNFCIIA…KVVAEVPAPV (185 aa)). Residues 29 to 34 (DHGKST) and 148 to 151 (NKID) contribute to the GTP site.

Belongs to the TRAFAC class translation factor GTPase superfamily. Classic translation factor GTPase family. LepA subfamily.

The protein resides in the cell membrane. It carries out the reaction GTP + H2O = GDP + phosphate + H(+). In terms of biological role, required for accurate and efficient protein synthesis under certain stress conditions. May act as a fidelity factor of the translation reaction, by catalyzing a one-codon backward translocation of tRNAs on improperly translocated ribosomes. Back-translocation proceeds from a post-translocation (POST) complex to a pre-translocation (PRE) complex, thus giving elongation factor G a second chance to translocate the tRNAs correctly. Binds to ribosomes in a GTP-dependent manner. This chain is Elongation factor 4, found in Streptomyces coelicolor (strain ATCC BAA-471 / A3(2) / M145).